Here is a 372-residue protein sequence, read N- to C-terminus: Flagellar P-ring protein (372 aa).

Residues 1–26 (MNLSSLSFRLLATLLGACVVVAPASA) form the signal peptide.

The protein belongs to the FlgI family. The basal body constitutes a major portion of the flagellar organelle and consists of four rings (L,P,S, and M) mounted on a central rod.

The protein localises to the periplasm. The protein resides in the bacterial flagellum basal body. In terms of biological role, assembles around the rod to form the L-ring and probably protects the motor/basal body from shearing forces during rotation. In Xanthomonas oryzae pv. oryzae (strain MAFF 311018), this protein is Flagellar P-ring protein.